Consider the following 96-residue polypeptide: Protein Vpr (96 aa).

The segment at 1–42 (MEQAPEDQGPQREPHNEWTLELLEELKNEAVRHFPRIWLHGL) is homooligomerization. Phosphoserine; by host is present on residues Ser-79, Ser-94, and Ser-96.

Belongs to the HIV-1 VPR protein family. As to quaternary structure, homooligomer, may form homodimer. Interacts with p6-gag region of the Pr55 Gag precursor protein through a (Leu-X-X)4 motif near the C-terminus of the P6gag protein. Interacts with host UNG. May interact with host RAD23A/HHR23A. Interacts with host VPRBP/DCAF1, leading to hijack the CUL4A-RBX1-DDB1-DCAF1/VPRBP complex, mediating ubiquitination of host proteins such as TERT and ZGPAT and arrest of the cell cycle in G2 phase. Post-translationally, phosphorylated on several residues by host. These phosphorylations regulate VPR activity for the nuclear import of the HIV-1 pre-integration complex.

The protein localises to the virion. It localises to the host nucleus. The protein resides in the host extracellular space. During virus entry, plays a role in the transport of the viral pre-integration (PIC) complex to the host nucleus. This function is crucial for viral infection of non-dividing macrophages. May act directly at the nuclear pore complex, by binding nucleoporins phenylalanine-glycine (FG)-repeat regions. Its function is as follows. During virus replication, may deplete host UNG protein, and incude G2-M cell cycle arrest. Acts by targeting specific host proteins for degradation by the 26S proteasome, through association with the cellular CUL4A-DDB1 E3 ligase complex by direct interaction with host VPRPB/DCAF-1. Cell cycle arrest reportedly occurs within hours of infection and is not blocked by antiviral agents, suggesting that it is initiated by the VPR carried into the virion. Additionally, VPR induces apoptosis in a cell cycle dependent manner suggesting that these two effects are mechanistically linked. Detected in the serum and cerebrospinal fluid of AIDS patient, VPR may also induce cell death to bystander cells. This is Protein Vpr from Homo sapiens (Human).